The sequence spans 135 residues: Ribosomal RNA large subunit methyltransferase H (135 aa).

Residues Leu-52, Gly-83, and 102–107 (LSSLTL) each bind S-adenosyl-L-methionine.

It belongs to the RNA methyltransferase RlmH family. As to quaternary structure, homodimer.

The protein localises to the cytoplasm. The catalysed reaction is pseudouridine(1915) in 23S rRNA + S-adenosyl-L-methionine = N(3)-methylpseudouridine(1915) in 23S rRNA + S-adenosyl-L-homocysteine + H(+). Specifically methylates the pseudouridine at position 1915 (m3Psi1915) in 23S rRNA. In Polynucleobacter necessarius subsp. necessarius (strain STIR1), this protein is Ribosomal RNA large subunit methyltransferase H.